A 585-amino-acid chain; its full sequence is Protein FAM83D (585 aa).

The DUF1669 stretch occupies residues 1 to 296 (MAARFELLDD…LYAQSEPISS (296 aa)). The residue at position 295 (Ser-295) is a Phosphoserine. Disordered stretches follow at residues 334-411 (LSST…TSSS) and 425-482 (AASS…SQGS). The tract at residues 337 to 585 (TPRKSNLGPE…RDIALYPPYQ (249 aa)) is required for interaction with KIF22 and function in chromosome congression. Composition is skewed to basic and acidic residues over residues 347-360 (EPPK…RPDS) and 369-383 (DYFH…DSKV). The span at 425-441 (AASSQATVWSKSTTTQT) shows a compositional bias: polar residues. Ser-458 is subject to Phosphoserine. Residues 458-482 (SPASKMSVSRSSSVRSSSSVSSQGS) show a composition bias toward low complexity. Thr-511 is modified (phosphothreonine).

It belongs to the FAM83 family. Interacts with FBXW7; promotes FBXW7 degradation. May interact with RAF1. Interacts with KIF22; recruits KIF22 to mitotic spindle microtubules. Interacts (via C-terminus) with DYNLL1. Interacts with HMMR. Directly interacts (via DUF1669) with CSNK1A1 and CSNK1A1L. In terms of processing, phosphorylated during mitosis.

It localises to the cytoplasm. The protein localises to the cytoskeleton. The protein resides in the spindle. Its subcellular location is the spindle pole. Functionally, through the degradation of FBXW7, may act indirectly on the expression and downstream signaling of MTOR, JUN and MYC. May play also a role in cell proliferation through activation of the ERK1/ERK2 signaling cascade. May also be important for proper chromosome congression and alignment during mitosis through its interaction with KIF22. This chain is Protein FAM83D, found in Mus musculus (Mouse).